Here is a 149-residue protein sequence, read N- to C-terminus: Large ribosomal subunit protein uL13 (149 aa).

It belongs to the universal ribosomal protein uL13 family. As to quaternary structure, part of the 50S ribosomal subunit.

In terms of biological role, this protein is one of the early assembly proteins of the 50S ribosomal subunit, although it is not seen to bind rRNA by itself. It is important during the early stages of 50S assembly. This is Large ribosomal subunit protein uL13 from Pelodictyon phaeoclathratiforme (strain DSM 5477 / BU-1).